Here is a 798-residue protein sequence, read N- to C-terminus: Serine/threonine-protein kinase haspin (798 aa).

The disordered stretch occupies residues 1-110 (MAASLPGPGS…WKLRARPSLT (110 aa)). Serine 58 carries the post-translational modification Phosphoserine. Residues 59-70 (QSDDPDDPDDPD) show a composition bias toward acidic residues. The residue at position 93 (serine 93) is a Phosphoserine; by AURKB. Threonine 97 is subject to Phosphothreonine. A Phosphoserine; by AURKB modification is found at serine 143. The residue at position 147 (serine 147) is a Phosphoserine. Residues 275-350 (LVVGNGPEGP…KHQEATETSL (76 aa)) are disordered. Residues 300–315 (CQERGLQEAVRREHQE) are compositionally biased toward basic and acidic residues. One can recognise a Protein kinase domain in the interval 484-798 (LQRCEKIGEG…DLLCQHSLFK (315 aa)). Residues 490–498 (IGEGVFGEV), lysine 511, 606–611 (EFGGID), 649–654 (DLHWGN), and 687–689 (DYT) contribute to the ATP site. The active-site Proton acceptor is aspartate 649.

This sequence belongs to the protein kinase superfamily. Ser/Thr protein kinase family. Haspin subfamily. Requires Mg(2+) as cofactor. In terms of processing, autophosphorylated on both serine and threonine residues. Strongly phosphorylated during mitosis but this does not appear to significantly affect its intrinsic kinase activity. Phosphorylation by AURKB is required for full activity toward histone H3 at 'Ser-3' in mitosis. In terms of tissue distribution, strongly expressed in testis. Also present in thymus and bone marrow and low levels observed in prostate, intestine, lung, spleen and lymph node. Expressed in fetal skin, liver, kidney and small intestine and also in proliferating but not non-proliferating cell lines.

Its subcellular location is the nucleus. It localises to the chromosome. It is found in the cytoplasm. The protein localises to the cytoskeleton. The protein resides in the spindle. It catalyses the reaction L-seryl-[protein] + ATP = O-phospho-L-seryl-[protein] + ADP + H(+). It carries out the reaction L-threonyl-[protein] + ATP = O-phospho-L-threonyl-[protein] + ADP + H(+). Constitutive activity that does not require phosphorylation. Specifically inhibited by 3-(1H-indazol-5-yl)-N-propylimidazo[1,2-b]pyridazin-6-amine (CHR-6494). Functionally, serine/threonine-protein kinase that phosphorylates histone H3 at 'Thr-3' (H3T3ph) during mitosis. May act through H3T3ph to both position and modulate activation of AURKB and other components of the chromosomal passenger complex (CPC) at centromeres to ensure proper chromatid cohesion, metaphase alignment and normal progression through the cell cycle. The chain is Serine/threonine-protein kinase haspin from Homo sapiens (Human).